The following is a 307-amino-acid chain: tRNA-cytidine(32) 2-sulfurtransferase (307 aa).

Positions 44–49 match the PP-loop motif motif; the sequence is SGGKDS. [4Fe-4S] cluster-binding residues include C119, C122, and C210.

It belongs to the TtcA family. As to quaternary structure, homodimer. Mg(2+) is required as a cofactor. The cofactor is [4Fe-4S] cluster.

Its subcellular location is the cytoplasm. It carries out the reaction cytidine(32) in tRNA + S-sulfanyl-L-cysteinyl-[cysteine desulfurase] + AH2 + ATP = 2-thiocytidine(32) in tRNA + L-cysteinyl-[cysteine desulfurase] + A + AMP + diphosphate + H(+). It participates in tRNA modification. Functionally, catalyzes the ATP-dependent 2-thiolation of cytidine in position 32 of tRNA, to form 2-thiocytidine (s(2)C32). The sulfur atoms are provided by the cysteine/cysteine desulfurase (IscS) system. In Aliivibrio fischeri (strain ATCC 700601 / ES114) (Vibrio fischeri), this protein is tRNA-cytidine(32) 2-sulfurtransferase.